The sequence spans 229 residues: Enolase-phosphatase E1 (229 aa).

This sequence belongs to the HAD-like hydrolase superfamily. MasA/MtnC family. Monomer. Mg(2+) serves as cofactor.

It catalyses the reaction 5-methylsulfanyl-2,3-dioxopentyl phosphate + H2O = 1,2-dihydroxy-5-(methylsulfanyl)pent-1-en-3-one + phosphate. Its pathway is amino-acid biosynthesis; L-methionine biosynthesis via salvage pathway; L-methionine from S-methyl-5-thio-alpha-D-ribose 1-phosphate: step 3/6. The protein operates within amino-acid biosynthesis; L-methionine biosynthesis via salvage pathway; L-methionine from S-methyl-5-thio-alpha-D-ribose 1-phosphate: step 4/6. In terms of biological role, bifunctional enzyme that catalyzes the enolization of 2,3-diketo-5-methylthiopentyl-1-phosphate (DK-MTP-1-P) into the intermediate 2-hydroxy-3-keto-5-methylthiopentenyl-1-phosphate (HK-MTPenyl-1-P), which is then dephosphorylated to form the acireductone 1,2-dihydroxy-3-keto-5-methylthiopentene (DHK-MTPene). This is Enolase-phosphatase E1 from Citrobacter koseri (strain ATCC BAA-895 / CDC 4225-83 / SGSC4696).